Reading from the N-terminus, the 794-residue chain is PAN2-PAN3 deadenylation complex subunit PAN3 (794 aa).

The C3H1-type zinc-finger motif lies at 7–36; the sequence is SAKDVLCKNILIYGYCKFQDKGCAFSHNKQ. 2 disordered regions span residues 40–97 and 187–226; these read PQQQ…TQSK and AQVGNNPGSTAPANLQLQQKQPQQPQQPQQPQQHQQQQQL. Polar residues-rich tracts occupy residues 83–94 and 189–199; these read IQSNGMVNSQET and VGNNPGSTAPA. Over residues 200 to 226 the composition is skewed to low complexity; it reads NLQLQQKQPQQPQQPQQPQQHQQQQQL. Residues 372 to 668 form a pseudokinase domain region; sequence QTMQHLSLPD…MDQFILQYIS (297 aa). Residues arginine 425 and 494–501 each bind ATP; that span reads DYYPNLTT. Positions 669–707 form a coiled coil; that stretch reads SHFMTLMNKLQNSHDWVELQLSTELENARLFRLMTKINF. The tract at residues 708 to 794 is knob domain; that stretch reads IISEMPTYDL…IDTQFRLLRG (87 aa).

It belongs to the protein kinase superfamily. PAN3 family. In terms of assembly, homodimer. Forms a heterotrimer with a catalytic subunit PAN2 to form the poly(A)-nuclease (PAN) deadenylation complex. Interacts (via PAM-2 motif) with poly(A)-binding protein PAB1 (via PABC domain), conferring substrate specificity of the enzyme complex.

The protein localises to the cytoplasm. In terms of biological role, regulatory subunit of the poly(A)-nuclease (PAN) deadenylation complex, one of two cytoplasmic mRNA deadenylases involved in mRNA turnover. PAN specifically shortens poly(A) tails of RNA and the activity is stimulated by poly(A)-binding protein PAB1. PAN deadenylation is followed by rapid degradation of the shortened mRNA tails by the CCR4-NOT complex. Deadenylated mRNAs are then degraded by two alternative mechanisms, namely exosome-mediated 3'-5' exonucleolytic degradation, or deadenylation-dependent mRNA decaping and subsequent 5'-3' exonucleolytic degradation by XRN1. May also be involved in post-transcriptional maturation of mRNA poly(A) tails. PAN3 acts as a positive regulator for PAN activity, recruiting the catalytic subunit PAN2 to mRNA via its interaction with RNA and with PAB1. In Lodderomyces elongisporus (strain ATCC 11503 / CBS 2605 / JCM 1781 / NBRC 1676 / NRRL YB-4239) (Yeast), this protein is PAN2-PAN3 deadenylation complex subunit PAN3.